We begin with the raw amino-acid sequence, 133 residues long: Hydrogenase maturation factor HypA (133 aa).

Histidine 2 provides a ligand contact to Ni(2+). Residues cysteine 73, cysteine 75, cysteine 105, and cysteine 108 each contribute to the Zn(2+) site.

Belongs to the HypA/HybF family.

Functionally, involved in the maturation of [NiFe] hydrogenases. Required for nickel insertion into the metal center of the hydrogenase. This chain is Hydrogenase maturation factor HypA, found in Methanosarcina acetivorans (strain ATCC 35395 / DSM 2834 / JCM 12185 / C2A).